Consider the following 197-residue polypeptide: Large ribosomal subunit protein uL10 (197 aa).

The tract at residues 162 to 197 (READGETAETPAQETASDDSKSTKAEASDASTTENK) is disordered. Over residues 179–188 (DDSKSTKAEA) the composition is skewed to basic and acidic residues.

The protein belongs to the universal ribosomal protein uL10 family. Part of the ribosomal stalk of the 50S ribosomal subunit. The N-terminus interacts with L11 and the large rRNA to form the base of the stalk. The C-terminus forms an elongated spine to which L12 dimers bind in a sequential fashion forming a multimeric L10(L12)X complex.

Functionally, forms part of the ribosomal stalk, playing a central role in the interaction of the ribosome with GTP-bound translation factors. This is Large ribosomal subunit protein uL10 from Oenococcus oeni (strain ATCC BAA-331 / PSU-1).